The sequence spans 217 residues: Monomethylamine corrinoid protein 1 (217 aa).

Residues M1 to E91 enclose the B12-binding N-terminal domain. In terms of domain architecture, B12-binding spans A93–K217. Residue H106 participates in methylcob(III)alamin binding.

As to quaternary structure, can form a complex with MtmB.

It functions in the pathway one-carbon metabolism; methanogenesis from methylamine. In terms of biological role, acts as a methyl group carrier between MtmB and MtbA. The chain is Monomethylamine corrinoid protein 1 (mtmC1) from Methanosarcina barkeri.